A 122-amino-acid polypeptide reads, in one-letter code: Large ribosomal subunit protein uL18 (122 aa).

It belongs to the universal ribosomal protein uL18 family. As to quaternary structure, part of the 50S ribosomal subunit; part of the 5S rRNA/L5/L18/L25 subcomplex. Contacts the 5S and 23S rRNAs.

This is one of the proteins that bind and probably mediate the attachment of the 5S RNA into the large ribosomal subunit, where it forms part of the central protuberance. The sequence is that of Large ribosomal subunit protein uL18 from Mycobacterium ulcerans (strain Agy99).